An 848-amino-acid polypeptide reads, in one-letter code: F-BAR domain only protein 2 (848 aa).

The 247-residue stretch at 4–250 (PYFLENFWGN…NMENTSVESL (247 aa)) folds into the F-BAR domain. Positions 87–114 (HMELVRKLQELIKEVQKYVDEQAKNHKK) form a coiled coil. 2 disordered regions span residues 292 to 316 (IPGR…NASN) and 404 to 526 (LSPT…RAES). Phosphoserine occurs at positions 405 and 417. A compositionally biased stretch (low complexity) spans 445-460 (PFGPTSTGSSSSLPQS). The 269-residue stretch at 580–848 (ALPIAVAFTE…FATGRYMADC (269 aa)) folds into the MHD domain.

Belongs to the FCHO family. In terms of assembly, homodimer.

It localises to the membrane. Its subcellular location is the clathrin-coated pit. May function in an early step of clathrin-mediated endocytosis. The sequence is that of F-BAR domain only protein 2 (fcho2) from Danio rerio (Zebrafish).